The chain runs to 526 residues: NAD(P)H-quinone oxidoreductase subunit 2 (526 aa).

A run of 14 helical transmembrane segments spans residues 16 to 36 (ILPE…DLIV), 43 to 63 (WIPY…YLGW), 80 to 100 (LSIL…MMSV), 107 to 127 (GTAL…GMFL), 133 to 153 (LVMI…LTGY), 168 to 188 (LLIG…LYGL), 211 to 231 (LALA…ISAV), 245 to 265 (PTPV…ALAI), 279 to 299 (WHFI…VVAL), 307 to 327 (MLAY…VAGT), 335 to 355 (IFYL…VILF), 379 to 399 (LGLS…GFFG), 401 to 421 (IYLF…LGLI), and 469 to 489 (LVLS…LFVI).

It belongs to the complex I subunit 2 family. In terms of assembly, NDH-1 can be composed of about 15 different subunits; different subcomplexes with different compositions have been identified which probably have different functions.

The protein resides in the cellular thylakoid membrane. The enzyme catalyses a plastoquinone + NADH + (n+1) H(+)(in) = a plastoquinol + NAD(+) + n H(+)(out). It carries out the reaction a plastoquinone + NADPH + (n+1) H(+)(in) = a plastoquinol + NADP(+) + n H(+)(out). Functionally, NDH-1 shuttles electrons from an unknown electron donor, via FMN and iron-sulfur (Fe-S) centers, to quinones in the respiratory and/or the photosynthetic chain. The immediate electron acceptor for the enzyme in this species is believed to be plastoquinone. Couples the redox reaction to proton translocation, and thus conserves the redox energy in a proton gradient. Cyanobacterial NDH-1 also plays a role in inorganic carbon-concentration. The polypeptide is NAD(P)H-quinone oxidoreductase subunit 2 (Picosynechococcus sp. (strain ATCC 27264 / PCC 7002 / PR-6) (Agmenellum quadruplicatum)).